The sequence spans 175 residues: Large ribosomal subunit protein bL17 (175 aa).

Positions 124–175 (VKKSKPTAPAQAVATKPAVEETREAAAAQPQEPEVEISEVKDPAEECEAKAD) are disordered. Over residues 161 to 175 (SEVKDPAEECEAKAD) the composition is skewed to basic and acidic residues.

This sequence belongs to the bacterial ribosomal protein bL17 family. Part of the 50S ribosomal subunit. Contacts protein L32.

In Geobacter sulfurreducens (strain ATCC 51573 / DSM 12127 / PCA), this protein is Large ribosomal subunit protein bL17.